The following is a 247-amino-acid chain: E3 ubiquitin ligase TRIM40 (247 aa).

The RING-type zinc-finger motif lies at 12–55; the sequence is CPICLDPLKEAVSTDCRHLFCRMCLIRHMDKASVSGVLSCPVCR. The B box-type zinc finger occupies 64–105; the sequence is GDNYICHTHQKRVCRFCESSRHLLCEECLQSPEHRAHTELSI. Residues Cys-69, His-72, Cys-91, and His-97 each coordinate Zn(2+). Positions 111–148 form a coiled coil; that stretch reads HYKERLNRRSRKLRKDLGDLQRLKAQEEKMLQALQVDW.

It belongs to the TRIM/RBCC family. As to quaternary structure, interacts with NEDD8.

It carries out the reaction S-ubiquitinyl-[E2 ubiquitin-conjugating enzyme]-L-cysteine + [acceptor protein]-L-lysine = [E2 ubiquitin-conjugating enzyme]-L-cysteine + N(6)-ubiquitinyl-[acceptor protein]-L-lysine.. E3 ubiquitin-protein ligase that plays a role in the limitation of the innate immune response. Mediates inhibition of the RLR signaling pathway by ubiquitinating RIGI and IFIH1 receptors, leading to their proteasomal degradation. Also promotes the neddylation of IKBKG/NEMO, stabilizing NFKBIA, and thereby inhibiting of NF-kappa-B nuclear translocation and activation. This Rattus norvegicus (Rat) protein is E3 ubiquitin ligase TRIM40 (Trim40).